Reading from the N-terminus, the 219-residue chain is Carboxypeptidase Y inhibitor (219 aa).

Residue Met1 is modified to N-acetylmethionine.

Belongs to the phosphatidylethanolamine-binding protein family. In terms of assembly, monomer.

It localises to the cytoplasm. Specific and potent inhibitor of carboxypeptidase Y. This is Carboxypeptidase Y inhibitor (TFS1) from Saccharomyces cerevisiae (strain ATCC 204508 / S288c) (Baker's yeast).